A 421-amino-acid polypeptide reads, in one-letter code: Uracil permease (421 aa).

The next 12 helical transmembrane spans lie at 18-38, 41-61, 65-85, 89-109, 115-135, 160-180, 186-206, 232-252, 304-324, 329-349, 371-391, and 393-413; these read IPLS…VPML, INPA…IFLC, IPAY…VIST, EAAL…GLLV, GWIE…VIGL, PKVI…NVMF, IIPI…LGIV, IAII…HLIV, VYSI…SFVG, LIQT…FGVI, ILTA…WGNF, and MKGM…FNII.

This sequence belongs to the nucleobase:cation symporter-2 (NCS2) (TC 2.A.40) family.

It localises to the cell membrane. With respect to regulation, inhibited by the proton gradient disruptor carbonyl cyanide m-chlorophenylhydrazone (CCCP), but not by the sodium gradient disruptor ouabain. Both xanthine and uric acid act as competitive inhibitors of uracil transport. In terms of biological role, specific for the uptake of uracil. Transport is probably proton-dependent. The protein is Uracil permease of Paenibacillus larvae subsp. larvae (strain NRRL B-3650 / LMG 16245).